Consider the following 314-residue polypeptide: Methionyl-tRNA formyltransferase (314 aa).

Position 113 to 116 (Ser-113 to Pro-116) interacts with (6S)-5,6,7,8-tetrahydrofolate.

This sequence belongs to the Fmt family.

It carries out the reaction L-methionyl-tRNA(fMet) + (6R)-10-formyltetrahydrofolate = N-formyl-L-methionyl-tRNA(fMet) + (6S)-5,6,7,8-tetrahydrofolate + H(+). In terms of biological role, attaches a formyl group to the free amino group of methionyl-tRNA(fMet). The formyl group appears to play a dual role in the initiator identity of N-formylmethionyl-tRNA by promoting its recognition by IF2 and preventing the misappropriation of this tRNA by the elongation apparatus. The sequence is that of Methionyl-tRNA formyltransferase from Stutzerimonas stutzeri (strain A1501) (Pseudomonas stutzeri).